The sequence spans 387 residues: MEDDAPVIYGLEFQARALTAQTAETDAIRFLVGTQSLKFDNQIHIIDFDDENNMINKSVLLHDAGEIWHISGSPADKAVLTTCYNKTSESRVLTCAAVWRMPPEWESGNHESPDDSSNNPQTLELLCHLDNSAHGSMACVLWEPMGDGKRVISLAENHVLLWDLQESSAKATISSSATLEGKGQLKFTAGKWSPHHNCTQLATANDTAIRGWDLRSMSQIYCIENAHGQLVRDLDFNPNKQYYLASCGDDCKVKFWDVRHISEPVKCLEEHSHWVWSVRYNHSHDQLLLTASSDSRVILSNMVSISSEPFGHLVDDDDLSDPEENQQEDKGKEPLQDSIISTYEEHEDSVYAVEWSAADPWLFASLSYDGRLVINRVPRALKYRILL.

WD repeat units follow at residues 132 to 172 (SAHG…AKAT), 182 to 222 (KGQL…QIYC), 226 to 266 (AHGQ…EPVK), and 270 to 310 (EHSH…SEPF). Residues 309 to 337 (PFGHLVDDDDLSDPEENQQEDKGKEPLQD) form a disordered region. Acidic residues predominate over residues 315–326 (DDDDLSDPEENQ). The stretch at 345 to 385 (EHEDSVYAVEWSAADPWLFASLSYDGRLVINRVPRALKYRI) is one WD 5 repeat.

It belongs to the WD repeat EIPR1 family.

The protein localises to the golgi apparatus. Its subcellular location is the trans-Golgi network. Functionally, may act as a component of endosomal retrieval machinery that is involved in protein transport from early endosomes to either recycling endosomes or the trans-Golgi network. The polypeptide is EARP-interacting protein homolog (Danio rerio (Zebrafish)).